The primary structure comprises 362 residues: Phosphoserine aminotransferase (362 aa).

Arg-43 provides a ligand contact to L-glutamate. Pyridoxal 5'-phosphate contacts are provided by residues 77–78, Trp-103, Thr-153, Asp-173, and Gln-196; that span reads AS. An N6-(pyridoxal phosphate)lysine modification is found at Lys-197. 238-239 is a pyridoxal 5'-phosphate binding site; the sequence is NT.

Belongs to the class-V pyridoxal-phosphate-dependent aminotransferase family. SerC subfamily. In terms of assembly, homodimer. Requires pyridoxal 5'-phosphate as cofactor.

It localises to the cytoplasm. It catalyses the reaction O-phospho-L-serine + 2-oxoglutarate = 3-phosphooxypyruvate + L-glutamate. The catalysed reaction is 4-(phosphooxy)-L-threonine + 2-oxoglutarate = (R)-3-hydroxy-2-oxo-4-phosphooxybutanoate + L-glutamate. Its pathway is amino-acid biosynthesis; L-serine biosynthesis; L-serine from 3-phospho-D-glycerate: step 2/3. Functionally, catalyzes the reversible conversion of 3-phosphohydroxypyruvate to phosphoserine and of 3-hydroxy-2-oxo-4-phosphonooxybutanoate to phosphohydroxythreonine. The chain is Phosphoserine aminotransferase from Lysinibacillus sphaericus (strain C3-41).